Reading from the N-terminus, the 200-residue chain is Large ribosomal subunit protein uL4c (200 aa).

The tract at residues 45–71 (RAEIRGGGRKPWKQKGTGRARAGSRRS) is disordered. Residues 51–68 (GGRKPWKQKGTGRARAGS) show a composition bias toward basic residues.

Belongs to the universal ribosomal protein uL4 family. In terms of assembly, part of the 50S ribosomal subunit.

It is found in the plastid. The protein localises to the chloroplast. Its function is as follows. Probably binds the 23S rRNA. In Cyanidioschyzon merolae (strain NIES-3377 / 10D) (Unicellular red alga), this protein is Large ribosomal subunit protein uL4c (rpl4).